Here is a 177-residue protein sequence, read N- to C-terminus: Nucleoside triphosphate/diphosphate phosphatase (177 aa).

The active-site Proton donor is the R24. Residues N88, D104, D106, D108, D121, and E124 each contribute to the Mg(2+) site.

This sequence belongs to the Ntdp family. It depends on Mg(2+) as a cofactor.

It carries out the reaction a ribonucleoside 5'-triphosphate + H2O = a ribonucleoside 5'-diphosphate + phosphate + H(+). It catalyses the reaction a ribonucleoside 5'-diphosphate + H2O = a ribonucleoside 5'-phosphate + phosphate + H(+). Functionally, has nucleoside phosphatase activity towards nucleoside triphosphates and nucleoside diphosphates. In Geobacillus sp. (strain WCH70), this protein is Nucleoside triphosphate/diphosphate phosphatase.